The primary structure comprises 226 residues: Deoxyribose-phosphate aldolase (226 aa).

Catalysis depends on glutamate 96, which acts as the Proton donor/acceptor. Residue lysine 157 is the Schiff-base intermediate with acetaldehyde of the active site. Catalysis depends on lysine 185, which acts as the Proton donor/acceptor.

It belongs to the DeoC/FbaB aldolase family. DeoC type 1 subfamily.

Its subcellular location is the cytoplasm. It catalyses the reaction 2-deoxy-D-ribose 5-phosphate = D-glyceraldehyde 3-phosphate + acetaldehyde. The protein operates within carbohydrate degradation; 2-deoxy-D-ribose 1-phosphate degradation; D-glyceraldehyde 3-phosphate and acetaldehyde from 2-deoxy-alpha-D-ribose 1-phosphate: step 2/2. Catalyzes a reversible aldol reaction between acetaldehyde and D-glyceraldehyde 3-phosphate to generate 2-deoxy-D-ribose 5-phosphate. This Gloeobacter violaceus (strain ATCC 29082 / PCC 7421) protein is Deoxyribose-phosphate aldolase.